The primary structure comprises 303 residues: Monoglyceride lipase (303 aa).

T10 carries the phosphothreonine modification. Position 58 is a 3'-nitrotyrosine (Y58). Catalysis depends on S122, which acts as the Nucleophile. S189 bears the Phosphoserine mark. Catalysis depends on charge relay system residues D239 and H269.

Belongs to the AB hydrolase superfamily. Monoacylglycerol lipase family. In terms of assembly, homodimer. As to expression, ubiquitous.

It is found in the cytoplasm. Its subcellular location is the cytosol. The protein resides in the membrane. The enzyme catalyses Hydrolyzes glycerol monoesters of long-chain fatty acids.. It carries out the reaction a 1-acylglycerol + H2O = glycerol + a fatty acid + H(+). It catalyses the reaction a 2-acylglycerol + H2O = glycerol + a fatty acid + H(+). The catalysed reaction is 2-(5Z,8Z,11Z,14Z-eicosatetraenoyl)-glycerol + H2O = glycerol + (5Z,8Z,11Z,14Z)-eicosatetraenoate + H(+). The enzyme catalyses 1-octanoylglycerol + H2O = octanoate + glycerol + H(+). It carries out the reaction 1-decanoylglycerol + H2O = decanoate + glycerol + H(+). It catalyses the reaction 1-dodecanoylglycerol + H2O = dodecanoate + glycerol + H(+). The catalysed reaction is 1-tetradecanoylglycerol + H2O = tetradecanoate + glycerol + H(+). The enzyme catalyses 2-hexadecanoylglycerol + H2O = glycerol + hexadecanoate + H(+). It carries out the reaction 1-(9Z-octadecenoyl)-glycerol + H2O = glycerol + (9Z)-octadecenoate + H(+). It catalyses the reaction 2-(9Z-octadecenoyl)-glycerol + H2O = glycerol + (9Z)-octadecenoate + H(+). The catalysed reaction is 2-(9Z,12Z-octadecadienoyl)-glycerol + H2O = (9Z,12Z)-octadecadienoate + glycerol + H(+). The enzyme catalyses 1-(5Z,8Z,11Z,14Z-eicosatetraenoyl)-glycerol + H2O = glycerol + (5Z,8Z,11Z,14Z)-eicosatetraenoate + H(+). It carries out the reaction 1-(9Z,12Z-octadecadienoyl)-glycerol + H2O = (9Z,12Z)-octadecadienoate + glycerol + H(+). It catalyses the reaction 1-hexadecanoylglycerol + H2O = glycerol + hexadecanoate + H(+). The catalysed reaction is 1-octadecanoylglycerol + H2O = octadecanoate + glycerol + H(+). The enzyme catalyses prostaglandin E2 1-glyceryl ester + H2O = prostaglandin E2 + glycerol + H(+). It carries out the reaction prostaglandin D2-1-glycerol ester + H2O = prostaglandin D2 + glycerol + H(+). It catalyses the reaction 2-glyceryl-15-deoxy-Delta(12,14)-prostaglandin J2 + H2O = 15-deoxy-Delta(12,14)-prostaglandin J2 + glycerol + H(+). The catalysed reaction is prostaglandin F2alpha 1-glyceryl ester + H2O = prostaglandin F2alpha + glycerol + H(+). Its pathway is glycerolipid metabolism; triacylglycerol degradation. Converts monoacylglycerides to free fatty acids and glycerol. Hydrolyzes the endocannabinoid 2-arachidonoylglycerol, and thereby contributes to the regulation of endocannabinoid signaling, nociperception and perception of pain. Regulates the levels of fatty acids that serve as signaling molecules and promote cancer cell migration, invasion and tumor growth. The chain is Monoglyceride lipase from Mus musculus (Mouse).